We begin with the raw amino-acid sequence, 338 residues long: Methionine import ATP-binding protein MetN 2 (338 aa).

An ABC transporter domain is found at 2–242 (IEIEKVCVDF…PQHAFTQQLV (241 aa)). 39 to 46 (GTSGAGKS) contacts ATP.

The protein belongs to the ABC transporter superfamily. Methionine importer (TC 3.A.1.24) family. As to quaternary structure, the complex is composed of two ATP-binding proteins (MetN), two transmembrane proteins (MetI) and a solute-binding protein (MetQ).

The protein localises to the cell inner membrane. The catalysed reaction is L-methionine(out) + ATP + H2O = L-methionine(in) + ADP + phosphate + H(+). It carries out the reaction D-methionine(out) + ATP + H2O = D-methionine(in) + ADP + phosphate + H(+). Functionally, part of the ABC transporter complex MetNIQ involved in methionine import. Responsible for energy coupling to the transport system. The protein is Methionine import ATP-binding protein MetN 2 of Salmonella typhi.